The sequence spans 466 residues: Cysteine--tRNA ligase (466 aa).

C28 provides a ligand contact to Zn(2+). The 'HIGH' region motif lies at 30-40 (PTVYNYIHIGN). The Zn(2+) site is built by C208, H233, and E237. The 'KMSKS' region signature appears at 265-269 (KMSKS). K268 contacts ATP. S269 carries the post-translational modification Phosphoserine.

It belongs to the class-I aminoacyl-tRNA synthetase family. Monomer. It depends on Zn(2+) as a cofactor.

The protein localises to the cytoplasm. The enzyme catalyses tRNA(Cys) + L-cysteine + ATP = L-cysteinyl-tRNA(Cys) + AMP + diphosphate. The protein is Cysteine--tRNA ligase of Shouchella clausii (strain KSM-K16) (Alkalihalobacillus clausii).